A 278-amino-acid polypeptide reads, in one-letter code: Checkpoint protein Hus1-like (278 aa).

It belongs to the HUS1 family. As to quaternary structure, component of the 9-1-1 checkpoint clamp complex consisting of Rad9 isoform A, Rad1 and Hus1-like; the interactions with Rad1 and Rad9 are direct. This complex probably also forms with Rad9 isoform B, however 9-1-1 complex containing Rad9 isoform A localizes to the nuclear periphery. Expressed in ovary.

Its subcellular location is the cytoplasm. It localises to the nucleus envelope. Its function is as follows. Component of the 9-1-1 checkpoint clamp complex. Involved in both meiotic and somatic DNA damage responses. Essential for activation of the meiotic checkpoint in response to double-strand DNA breaks; required for the S-phase checkpoint but not the G2-M phase checkpoint. Involved in double strand break repair by homologous recombination during meiosis; influences the organization of chromosomal DNA in the meiotic nucleus. The polypeptide is Checkpoint protein Hus1-like (Drosophila melanogaster (Fruit fly)).